The sequence spans 417 residues: NADH-quinone oxidoreductase subunit D (417 aa).

The protein belongs to the complex I 49 kDa subunit family. In terms of assembly, NDH-1 is composed of 14 different subunits. Subunits NuoB, C, D, E, F, and G constitute the peripheral sector of the complex.

It is found in the cell inner membrane. The enzyme catalyses a quinone + NADH + 5 H(+)(in) = a quinol + NAD(+) + 4 H(+)(out). Functionally, NDH-1 shuttles electrons from NADH, via FMN and iron-sulfur (Fe-S) centers, to quinones in the respiratory chain. The immediate electron acceptor for the enzyme in this species is believed to be ubiquinone. Couples the redox reaction to proton translocation (for every two electrons transferred, four hydrogen ions are translocated across the cytoplasmic membrane), and thus conserves the redox energy in a proton gradient. In Burkholderia cenocepacia (strain HI2424), this protein is NADH-quinone oxidoreductase subunit D.